Here is a 251-residue protein sequence, read N- to C-terminus: Phosphate import ATP-binding protein PstB (251 aa).

Residues 5–246 (FDIRNFSVYY…PEKELTEKYL (242 aa)) form the ABC transporter domain. 37–44 (GPSGCGKS) serves as a coordination point for ATP.

It belongs to the ABC transporter superfamily. Phosphate importer (TC 3.A.1.7) family. As to quaternary structure, the complex is composed of two ATP-binding proteins (PstB), two transmembrane proteins (PstC and PstA) and a solute-binding protein (PstS).

The protein resides in the cell membrane. The catalysed reaction is phosphate(out) + ATP + H2O = ADP + 2 phosphate(in) + H(+). Part of the ABC transporter complex PstSACB involved in phosphate import. Responsible for energy coupling to the transport system. The sequence is that of Phosphate import ATP-binding protein PstB from Archaeoglobus fulgidus (strain ATCC 49558 / DSM 4304 / JCM 9628 / NBRC 100126 / VC-16).